The following is a 196-amino-acid chain: MCSRVRWTLRWESELQLDDHVELASFFRKTYGPTGAFNAKPFEGSRSWAGARPELRAIAYDSNGVAAHMGLLRRFIKVGEVDLLVAELGLYGVRPDLEGLGISHSLRVMYPVLQQLRVPFGFGAVRHALQKHVERFGRHVPANVLSGIRVRSTLPDARLDLPPTRIEDVLVVVFPVELAMSDWPTATFIDRNGPEL.

This sequence belongs to the NodA family.

It is found in the cytoplasm. N-acyltransferase required for nodulation. Acts in the production of a small, heat-stable compound (Nod) that stimulates mitosis in various plant protoplasts. This Sinorhizobium terangae protein is Nodulation protein A.